The sequence spans 743 residues: Threonine--tRNA ligase (743 aa).

Positions 1-15 are enriched in low complexity; sequence MSADSPSSPASSQAA. The segment at 1-30 is disordered; the sequence is MSADSPSSPASSQAAEVQVRLPDGSLKTQP. The 64-residue stretch at 13–76 folds into the TGS domain; sequence QAAEVQVRLP…GEIADDENVV (64 aa). Residues 264–619 are catalytic; the sequence is DHRVLGKQHG…LIEHFAGAFP (356 aa). The tract at residues 354-404 is insert; sequence AWSTRLDKDDLSKDDEDKLIAAAEVFGVKLPDYKPSASNDAKKDVLHRWQL. 3 residues coordinate Zn(2+): C416, H467, and H596.

This sequence belongs to the class-II aminoacyl-tRNA synthetase family. In terms of assembly, homodimer. The cofactor is Zn(2+).

Its subcellular location is the cytoplasm. The catalysed reaction is tRNA(Thr) + L-threonine + ATP = L-threonyl-tRNA(Thr) + AMP + diphosphate + H(+). Functionally, catalyzes the attachment of threonine to tRNA(Thr) in a two-step reaction: L-threonine is first activated by ATP to form Thr-AMP and then transferred to the acceptor end of tRNA(Thr). Also edits incorrectly charged L-seryl-tRNA(Thr). This is Threonine--tRNA ligase from Rhodopirellula baltica (strain DSM 10527 / NCIMB 13988 / SH1).